Reading from the N-terminus, the 313-residue chain is Alpha-S1-casein (313 aa).

The first 15 residues, 1-15 (MKLLILTCLVAAAFA), serve as a signal peptide directing secretion. Low complexity predominate over residues 77–96 (ASEEQAMASAQEDSSISSSS). Positions 77–111 (ASEEQAMASAQEDSSISSSSEESEEAIPNITEQKN) are disordered. Residues Ser-90, Ser-91, Ser-93, Ser-94, Ser-95, and Ser-96 each carry the phosphoserine modification. 15 repeat units span residues 135–140 (LLQKAS), 141–146 (LAKQAS), 147–152 (LFQQPS), 153–158 (LVQQAS), 159–164 (LFQQPS), 165–170 (LLQQAS), 171–176 (LFQQPS), 177–182 (MAQQAS), 183–188 (LLQQLL), 189–194 (LAQQPS), 195–200 (LALQVS), 201–206 (PAQQSS), 207–212 (LVQQAF), 213–218 (LAQQAS), and 219–224 (LAQKHH). The tract at residues 135 to 224 (LLQKASLAKQ…QQASLAQKHH (90 aa)) is 15 X 6 AA tandem repeats.

This sequence belongs to the alpha-casein family. As to expression, mammary gland specific. Secreted in milk.

It is found in the secreted. Functionally, important role in the capacity of milk to transport calcium phosphate. This Mus musculus (Mouse) protein is Alpha-S1-casein (Csn1s1).